We begin with the raw amino-acid sequence, 443 residues long: Crh-like protein 2 (443 aa).

The N-terminal stretch at 1–20 (MVRIGSSLLLATLAATTVSA) is a signal peptide. Positions 21 to 306 (ASDPPKCSQD…TVECYDPPSG (286 aa)) constitute a GH16 domain. A disulfide bond links Cys-56 and Cys-67. Glu-164 serves as the catalytic Nucleophile. Glu-168 acts as the Proton donor in catalysis. A chitin-binding site is contributed by Glu-168. Asn-194 and Asn-237 each carry an N-linked (GlcNAc...) asparagine glycan. Chitin contacts are provided by Trp-257 and Thr-268. 2 N-linked (GlcNAc...) asparagine glycosylation sites follow: Asn-332 and Asn-359. Low complexity-rich tracts occupy residues 350-367 (ASSSASGSANKTSSSANT) and 378-410 (EPGNSHSGSSGSGTSTSDGSGSSTGFSQGSETS). Residues 350–420 (ASSSASGSAN…ASSNKNAAPS (71 aa)) are disordered. Residues 411–420 (ASSNKNAAPS) are compositionally biased toward polar residues. A lipid anchor (GPI-like-anchor amidated asparagine) is attached at Asn-416. Positions 417 to 443 (AAPSQNERVLNGSFFAVLVAVVALVTL) are cleaved as a propeptide — removed in mature form. N-linked (GlcNAc...) asparagine glycosylation is present at Asn-427.

It belongs to the glycosyl hydrolase 16 family. CRH1 subfamily. Post-translationally, the GPI-like anchor contains a phosphoceramide lipid group. The anchor position has not been determined.

It localises to the cell membrane. The protein localises to the secreted. Its subcellular location is the cell wall. The catalysed reaction is Random endo-hydrolysis of N-acetyl-beta-D-glucosaminide (1-&gt;4)-beta-linkages in chitin and chitodextrins.. In terms of biological role, dual chitinase/transglycosylase that plays a role in cell wall architecture. Chitinase and transglycosylase activities are coupled. Required for the polysaccharide cross-linking at the septa and the cell wall. More specifically, transfers chitin to 1,6-beta-glucan in the cell wall. The protein is Crh-like protein 2 of Aspergillus fumigatus (strain ATCC MYA-4609 / CBS 101355 / FGSC A1100 / Af293) (Neosartorya fumigata).